Reading from the N-terminus, the 414-residue chain is 5-aminolevulinate synthase (414 aa).

Arginine 22, serine 133, and lysine 152 together coordinate substrate. 3 residues coordinate pyridoxal 5'-phosphate: serine 185, histidine 213, and threonine 241. Lysine 244 is an active-site residue. N6-(pyridoxal phosphate)lysine is present on lysine 244. Pyridoxal 5'-phosphate is bound by residues threonine 273 and threonine 274. Position 359 (threonine 359) interacts with substrate.

This sequence belongs to the class-II pyridoxal-phosphate-dependent aminotransferase family. Homodimer. Pyridoxal 5'-phosphate serves as cofactor.

The catalysed reaction is succinyl-CoA + glycine + H(+) = 5-aminolevulinate + CO2 + CoA. It participates in porphyrin-containing compound metabolism; protoporphyrin-IX biosynthesis; 5-aminolevulinate from glycine: step 1/1. The chain is 5-aminolevulinate synthase (hemA) from Rickettsia typhi (strain ATCC VR-144 / Wilmington).